Here is a 444-residue protein sequence, read N- to C-terminus: Glucoside xylosyltransferase 2 (444 aa).

Residues 1-4 are Cytoplasmic-facing; the sequence is MKLR. Residues 5–25 traverse the membrane as a helical; Signal-anchor for type II membrane protein segment; it reads SKAAALLLLALAVLLLALLSL. Residues 26–444 are Lumenal-facing; it reads RARRDPEPPG…IIHMGPNPMS (419 aa). Positions 31–101 are disordered; that stretch reads PEPPGFPARP…LARRPGETRS (71 aa). The span at 68-83 shows a compositional bias: basic residues; it reads RSPRRQPPRLRPRAGR. Residues 87-101 show a composition bias toward basic and acidic residues; the sequence is ASREKLARRPGETRS. A glycan (N-linked (GlcNAc...) asparagine) is linked at asparagine 275.

It belongs to the glycosyltransferase 8 family.

It is found in the membrane. It carries out the reaction 3-O-(beta-D-glucosyl)-L-seryl-[EGF-like domain protein] + UDP-alpha-D-xylose = 3-O-[alpha-D-xylosyl-(1-&gt;3)-beta-D-glucosyl]-L-seryl-[EGF-like domain protein] + UDP + H(+). Functionally, glycosyltransferase which elongates the O-linked glucose attached to EGF-like repeats in the extracellular domain of Notch proteins by catalyzing the addition of xylose. This is Glucoside xylosyltransferase 2 (Gxylt2) from Mus musculus (Mouse).